Here is a 247-residue protein sequence, read N- to C-terminus: Probable transcriptional regulatory protein lpl1249 (247 aa).

This sequence belongs to the TACO1 family.

The protein localises to the cytoplasm. The polypeptide is Probable transcriptional regulatory protein lpl1249 (Legionella pneumophila (strain Lens)).